The following is a 283-amino-acid chain: uncharacterized protein (283 aa).

5 helical membrane passes run 8-28 (LILS…IGYV), 38-58 (GIHS…VKIA), 73-93 (FECL…YEIG), 100-120 (IIYG…ILSI), and 175-195 (AIAG…ICLT).

This sequence belongs to the cation diffusion facilitator (CDF) transporter (TC 2.A.4) family.

It is found in the cell membrane. This is an uncharacterized protein from Methanocaldococcus jannaschii (strain ATCC 43067 / DSM 2661 / JAL-1 / JCM 10045 / NBRC 100440) (Methanococcus jannaschii).